Here is a 295-residue protein sequence, read N- to C-terminus: Small ribosomal subunit protein uS2 (295 aa).

An N-acetylserine modification is found at Ser-2. Phosphoserine is present on Ser-43. Lys-52 is modified (N6-acetyllysine). The tract at residues 54–113 is interaction with PPP1R16B; it reads TWEKLLLAARAIVAIENPADVSVISSRNTGQRAVLKFAAATGATPIAGRFTPGTFTNQIQ. Position 89 is an N6-acetyllysine; alternate (Lys-89). Lys-89 is covalently cross-linked (Glycyl lysine isopeptide (Lys-Gly) (interchain with G-Cter in SUMO2); alternate). Thr-97 carries the phosphothreonine modification. 2 laminin-binding regions span residues 161-180 and 205-229; these read IPCN…MLAR and RDPE…EFQG. 5 [DE]-W-[ST] repeats span residues 230 to 232, 247 to 249, 266 to 268, 275 to 277, and 293 to 295; these read EWT, DWS, and EWS. A laminin-binding region spans residues 242–295; the sequence is QPEVADWSEGVQVPSVPIQQFPTEDWSAQPATEDWSAAPTAQATEWVGATTEWS. Residues 266-295 form a disordered region; it reads DWSAQPATEDWSAAPTAQATEWVGATTEWS.

The protein belongs to the universal ribosomal protein uS2 family. In terms of assembly, monomer (37LRP) and homodimer (67LR). Component of the small ribosomal subunit. Mature ribosomes consist of a small (40S) and a large (60S) subunit. The 40S subunit contains about 33 different proteins and 1 molecule of RNA (18S). The 60S subunit contains about 49 different proteins and 3 molecules of RNA (28S, 5.8S and 5S). Interacts with RPS21. Interacts with several laminins including at least LAMB1. Interacts with MDK. The mature dimeric form interacts with PPP1R16B (via its fourth ankyrin repeat). Interacts with PPP1CA only in the presence of PPP1R16B. Post-translationally, acylated. Acylation may be a prerequisite for conversion of the monomeric 37 kDa laminin receptor precursor (37LRP) to the mature dimeric 67 kDa laminin receptor (67LR), and may provide a mechanism for membrane association. Cleaved by stromelysin-3 (ST3) at the cell surface. Cleavage by stromelysin-3 may be a mechanism to alter cell-extracellular matrix interactions. As to expression, expressed in most neurons and in a subset of glial cells. The overall distribution of LR correlates with that reported for laminin-1 but also with brain regions classically associated with prion-related neurodegeneration.

Its subcellular location is the cell membrane. The protein resides in the cytoplasm. It localises to the nucleus. Required for the assembly and/or stability of the 40S ribosomal subunit. Required for the processing of the 20S rRNA-precursor to mature 18S rRNA in a late step of the maturation of 40S ribosomal subunits. Also functions as a cell surface receptor for laminin. Plays a role in cell adhesion to the basement membrane and in the consequent activation of signaling transduction pathways. May play a role in cell fate determination and tissue morphogenesis. Also acts as a receptor for several other ligands, including the pathogenic prion protein, viruses, and bacteria. Acts as a PPP1R16B-dependent substrate of PPP1CA. In Rattus norvegicus (Rat), this protein is Small ribosomal subunit protein uS2 (Rpsa).